The primary structure comprises 426 residues: Enolase (426 aa).

Position 163 (Gln163) interacts with (2R)-2-phosphoglycerate. Glu205 acts as the Proton donor in catalysis. Mg(2+) is bound by residues Asp242, Glu286, and Asp313. Residues Lys338, Arg367, Ser368, and Lys389 each coordinate (2R)-2-phosphoglycerate. Lys338 functions as the Proton acceptor in the catalytic mechanism.

This sequence belongs to the enolase family. It depends on Mg(2+) as a cofactor.

The protein localises to the cytoplasm. It localises to the secreted. It is found in the cell surface. It carries out the reaction (2R)-2-phosphoglycerate = phosphoenolpyruvate + H2O. It participates in carbohydrate degradation; glycolysis; pyruvate from D-glyceraldehyde 3-phosphate: step 4/5. In terms of biological role, catalyzes the reversible conversion of 2-phosphoglycerate (2-PG) into phosphoenolpyruvate (PEP). It is essential for the degradation of carbohydrates via glycolysis. The chain is Enolase from Helicobacter acinonychis (strain Sheeba).